A 270-amino-acid polypeptide reads, in one-letter code: 3-methyl-2-oxobutanoate hydroxymethyltransferase (270 aa).

Mg(2+) is bound by residues Asp43 and Asp82. 3-methyl-2-oxobutanoate contacts are provided by residues 43–44 (DS), Asp82, and Lys112. Glu114 is a binding site for Mg(2+). Glu179 functions as the Proton acceptor in the catalytic mechanism.

It belongs to the PanB family. As to quaternary structure, homodecamer; pentamer of dimers. The cofactor is Mg(2+).

The protein resides in the cytoplasm. The enzyme catalyses 3-methyl-2-oxobutanoate + (6R)-5,10-methylene-5,6,7,8-tetrahydrofolate + H2O = 2-dehydropantoate + (6S)-5,6,7,8-tetrahydrofolate. It participates in cofactor biosynthesis; (R)-pantothenate biosynthesis; (R)-pantoate from 3-methyl-2-oxobutanoate: step 1/2. In terms of biological role, catalyzes the reversible reaction in which hydroxymethyl group from 5,10-methylenetetrahydrofolate is transferred onto alpha-ketoisovalerate to form ketopantoate. The sequence is that of 3-methyl-2-oxobutanoate hydroxymethyltransferase from Oceanobacillus iheyensis (strain DSM 14371 / CIP 107618 / JCM 11309 / KCTC 3954 / HTE831).